The sequence spans 635 residues: MTNSNLRTENHFDYVKIKLASPERVMEWGQRTLPNGQVVGEVTKPETINYRTLKPEMDGLFCEKIFGPSKDWECHCGKYKRVRHRGIVCERCGVEVTESRVRRHRMGFIKLAAPVSHVWYLKGIPSYVAILLDMPLRDVEQIVYFNCYVVLDIGDSKDLKYKQLLTEDEWLEIEDEIYAEDSTIENEPIVGIGAEALKQLLEDLNLKEVAEQLREDIATSKGQKRAKLIKRLRVIDNFIATSASPEWMVLDAIPVIPPDLRPMVQLDGGRFATSDLNDLYRRVINRNNRLARLQEILAPEIIVRNEKRMLQEAVDALIDNGRRGRTVVGANNRPLKSLSDIIEGKQGRFRQNLLGKRVDYSGRSVIVVGPKLKMHQCGLPKEMAIELFQPFVIHRLIRQNIVNNIKAAKKLIQKADDEVMQVLQEVIEGHPILLNRAPTLHRLGIQAFEPKLVAGRAIQLHPLVCPAFNADFDGDQMAVHVPLAIEAQTEARMLMLASNNILSPATGDPIVTPSQDMVLGSYYLTAIQPQAKQPKFGDYSDTYASLEDVLQALEDKRIDLHDWVWVRFSGEIEDDDELQKPLKSETLKDGTRIEEWTYRRDRLDEDGSLISRYILTTVGRVVMNHTIIDAVAATS.

The Zn(2+) site is built by C74, C76, C89, and C92. Mg(2+) contacts are provided by D471, D473, and D475.

Belongs to the RNA polymerase beta' chain family. RpoC1 subfamily. As to quaternary structure, in cyanobacteria the RNAP catalytic core is composed of 2 alpha, 1 beta, 1 beta', 1 gamma and 1 omega subunit. When a sigma factor is associated with the core the holoenzyme is formed, which can initiate transcription. Requires Mg(2+) as cofactor. It depends on Zn(2+) as a cofactor.

The enzyme catalyses RNA(n) + a ribonucleoside 5'-triphosphate = RNA(n+1) + diphosphate. Functionally, DNA-dependent RNA polymerase catalyzes the transcription of DNA into RNA using the four ribonucleoside triphosphates as substrates. This is DNA-directed RNA polymerase subunit gamma from Prochlorococcus marinus (strain NATL1A).